Here is a 257-residue protein sequence, read N- to C-terminus: Imidazole glycerol phosphate synthase subunit hisF1 (257 aa).

Active-site residues include D11 and D130.

Belongs to the HisA/HisF family. As to quaternary structure, heterodimer of HisH and HisF.

The protein resides in the cytoplasm. The enzyme catalyses 5-[(5-phospho-1-deoxy-D-ribulos-1-ylimino)methylamino]-1-(5-phospho-beta-D-ribosyl)imidazole-4-carboxamide + L-glutamine = D-erythro-1-(imidazol-4-yl)glycerol 3-phosphate + 5-amino-1-(5-phospho-beta-D-ribosyl)imidazole-4-carboxamide + L-glutamate + H(+). It participates in amino-acid biosynthesis; L-histidine biosynthesis; L-histidine from 5-phospho-alpha-D-ribose 1-diphosphate: step 5/9. IGPS catalyzes the conversion of PRFAR and glutamine to IGP, AICAR and glutamate. The HisF subunit catalyzes the cyclization activity that produces IGP and AICAR from PRFAR using the ammonia provided by the HisH subunit. This chain is Imidazole glycerol phosphate synthase subunit hisF1 (hisF1), found in Vibrio vulnificus (strain YJ016).